The sequence spans 489 residues: NADH-quinone oxidoreductase subunit N (489 aa).

The next 14 helical transmembrane spans lie at 15 to 35 (APLL…VFFI), 44 to 64 (GYLA…LWGV), 78 to 98 (FALT…TMSL), 106 to 126 (IEQG…ILLA), 131 to 151 (LIVL…LTGF), 166 to 186 (LVLG…IFGA), 209 to 229 (LTLL…KVAL), 244 to 264 (PTPV…AALV), 278 to 298 (WLPV…LGAV), 306 to 326 (MLAY…MVAG), 333 to 353 (AFLF…AVLI), 378 to 398 (LAVA…MAGF), 412 to 432 (GLPW…FFYL), and 459 to 479 (IALA…VFAL).

It belongs to the complex I subunit 2 family. As to quaternary structure, NDH-1 is composed of 14 different subunits. Subunits NuoA, H, J, K, L, M, N constitute the membrane sector of the complex.

The protein resides in the cell membrane. It carries out the reaction a quinone + NADH + 5 H(+)(in) = a quinol + NAD(+) + 4 H(+)(out). Its function is as follows. NDH-1 shuttles electrons from NADH, via FMN and iron-sulfur (Fe-S) centers, to quinones in the respiratory chain. The immediate electron acceptor for the enzyme in this species is believed to be ubiquinone. Couples the redox reaction to proton translocation (for every two electrons transferred, four hydrogen ions are translocated across the cytoplasmic membrane), and thus conserves the redox energy in a proton gradient. This is NADH-quinone oxidoreductase subunit N from Chloroflexus aggregans (strain MD-66 / DSM 9485).